A 337-amino-acid chain; its full sequence is Glucose transporter 2C (337 aa).

Residues 1-22 (MTERRDNVSHAPDAIEGPNDGA) are disordered. At 1–43 (MTERRDNVSHAPDAIEGPNDGAHAEDTSPGFFSLENLGVAQVQ) the chain is on the cytoplasmic side. Residues 44 to 64 (VVGGTLNGFSIGFVAVYILLY) traverse the membrane as a helical segment. Over 65-119 (EVATNCSLFKTTEACKAVGSYGCEWKDTEVCSWKKECDSDSDGVNPCESLIGYSS) the chain is Extracellular. N69 carries N-linked (GlcNAc...) asparagine glycosylation. The helical transmembrane segment at 120–140 (LYSGIFASAMIVGSMVGSIIA) threads the bilayer. Over 141–152 (GKCITMFGLKKS) the chain is Cytoplasmic. Residues 153-173 (FIIVGVMSVVASALNHISVAT) form a helical membrane-spanning segment. The Extracellular segment spans residues 174-175 (NE). A helical transmembrane segment spans residues 176-196 (FWVLCAGRVLMGIGLGVVCVI). The Cytoplasmic segment spans residues 197–214 (CPMYVNENAHPKLSKVDG). A helical membrane pass occupies residues 215–235 (VLFQVFITFGIMLAAMLGLIL). The Extracellular segment spans residues 236-250 (DKTVNYDNDPDMAGR). A helical transmembrane segment spans residues 251-271 (FHGFCAVSSVLSVAMFLVGMF). Residues 272-300 (LRESTATFSQDDDGKADGGMDPNEYGWGQ) lie on the Cytoplasmic side of the membrane. The helical transmembrane segment at 301–321 (MLWPLFMGAVTAGTLQLTGIN) threads the bilayer. The Extracellular portion of the chain corresponds to 322-337 (AVMNYAPKITENLGMD).

This sequence belongs to the major facilitator superfamily. Sugar transporter (TC 2.A.1.1) family.

It is found in the membrane. Its function is as follows. Facilitative glucose transporter. In Trypanosoma brucei brucei, this protein is Glucose transporter 2C (THT2C).